Here is a 419-residue protein sequence, read N- to C-terminus: BTB/POZ domain-containing protein KCTD20 (419 aa).

The 75-residue stretch at 117 to 191 (EKVTLLVDGT…YKTGIINCPD (75 aa)) folds into the BTB domain.

As to quaternary structure, interacts with AKT1; AKT2 and AKT3. Associates with PP2CA. Part of a complex containing MARK4.

Its subcellular location is the cytoplasm. Promotes the phosphorylation of AKT family members. This is BTB/POZ domain-containing protein KCTD20 (KCTD20) from Homo sapiens (Human).